A 95-amino-acid chain; its full sequence is Immunogenic miracidial antigen 8C (95 aa).

Residues 1–15 (EFTISFSSPVISTGQ) show a composition bias toward polar residues. Residues 1–95 (EFTISFSSPV…PKKYGSGHKY (95 aa)) are disordered. A compositionally biased stretch (acidic residues) spans 20–41 (GDEDYHDGDDDVDYTDDVDDVD). Polar residues predominate over residues 45–59 (GSPSQLLQGGYQRNQ).

The protein belongs to the immunogenic miracidial antigen family.

This chain is Immunogenic miracidial antigen 8C (8C), found in Schistosoma japonicum (Blood fluke).